A 478-amino-acid polypeptide reads, in one-letter code: Shikimate biosynthesis protein AroDE (478 aa).

The tract at residues 1 to 208 is 3-dehydroquinate dehydratase; the sequence is MLCTIIRGPS…LNHHYFYNFT (208 aa). 3-dehydroquinate contacts are provided by residues Ser-21, 29-31, and 55-57; these read EMR and TWK. His-110 functions as the Proton donor/acceptor; for 3-dehydroquinate dehydratase activity in the catalytic mechanism. Catalysis depends on Lys-133, which acts as the Schiff-base intermediate with substrate; for 3-dehydroquinate dehydratase activity. 3-dehydroquinate-binding residues include Arg-171 and Gln-196. The shikimate 5-dehydrogenase stretch occupies residues 209–478; the sequence is NLSPQSQICA…VLASLFSIAA (270 aa). Residue 226–228 participates in shikimate binding; the sequence is SIG. The Proton acceptor; for shikimate dehydrogenase activity role is filled by Lys-277. Shikimate is bound by residues Asn-298 and Asp-313. NADP(+) is bound by residues 337-341, 360-362, and Gly-435; these read GAGGA and NRT. A shikimate-binding site is contributed by Gln-442.

In the N-terminal section; belongs to the type-I 3-dehydroquinase family. The protein in the C-terminal section; belongs to the shikimate dehydrogenase family.

The enzyme catalyses 3-dehydroquinate = 3-dehydroshikimate + H2O. The catalysed reaction is shikimate + NADP(+) = 3-dehydroshikimate + NADPH + H(+). It participates in metabolic intermediate biosynthesis; chorismate biosynthesis; chorismate from D-erythrose 4-phosphate and phosphoenolpyruvate: step 3/7. The protein operates within metabolic intermediate biosynthesis; chorismate biosynthesis; chorismate from D-erythrose 4-phosphate and phosphoenolpyruvate: step 4/7. Its function is as follows. Bifunctional enzyme that catalyzes two sequential steps of the aromatic amino acids biosynthetic pathway. In the first reaction, the AroD domain catalyzes the cis-dehydration of 3-dehydroquinate (DHQ) and introduces the first double bond of the aromatic ring to yield 3-dehydroshikimate; in the second reaction, the AroE domain catalyzes the reversible NADPH linked reduction of 3-dehydroshikimate (DHSA) to yield shikimate (SA). The polypeptide is Shikimate biosynthesis protein AroDE (Chlamydia muridarum (strain MoPn / Nigg)).